We begin with the raw amino-acid sequence, 388 residues long: NADH-quinone oxidoreductase subunit D 2 (388 aa).

It belongs to the complex I 49 kDa subunit family. In terms of assembly, NDH-1 is composed of 14 different subunits. Subunits NuoB, C, D, E, F, and G constitute the peripheral sector of the complex.

Its subcellular location is the cell inner membrane. The enzyme catalyses a quinone + NADH + 5 H(+)(in) = a quinol + NAD(+) + 4 H(+)(out). Its function is as follows. NDH-1 shuttles electrons from NADH, via FMN and iron-sulfur (Fe-S) centers, to quinones in the respiratory chain. The immediate electron acceptor for the enzyme in this species is believed to be ubiquinone. Couples the redox reaction to proton translocation (for every two electrons transferred, four hydrogen ions are translocated across the cytoplasmic membrane), and thus conserves the redox energy in a proton gradient. In Sorangium cellulosum (strain So ce56) (Polyangium cellulosum (strain So ce56)), this protein is NADH-quinone oxidoreductase subunit D 2.